Here is a 195-residue protein sequence, read N- to C-terminus: MELSLVVFTVVCWVSVWSDDRIISDRHAVYWNSSNSRFWQGEYTVAVSINDYLDVYCPYYESPQPHSRMERYILFMVNHDGYLTCEHRMRGFKRWECNRPQSPDGPLRFSEKFQLFTPFSLGFEFRPGHEYYYISSPHPNHAGKPCLKLKVYVKPTSSGYESPEPFLTDQSQRCGADGPCLAVLMLLLVFLLAGV.

A signal peptide spans 1–16; that stretch reads MELSLVVFTVVCWVSV. An Ephrin RBD domain is found at 24–157; it reads SDRHAVYWNS…KLKVYVKPTS (134 aa). Asn-32 carries N-linked (GlcNAc...) asparagine glycosylation. Intrachain disulfides connect Cys-57/Cys-97 and Cys-85/Cys-146. Cys-174 is lipidated: GPI-anchor amidated cysteine. A propeptide spans 175–195 (removed in mature form); the sequence is GADGPCLAVLMLLLVFLLAGV.

This sequence belongs to the ephrin family. Binds to the receptor tyrosine kinases epha2, epha3, epha4 and epha5. Interacts with epha8; activates epha8. As to expression, widespread expression in the embryo.

It localises to the cell membrane. In terms of biological role, cell surface GPI-bound ligand for Eph receptors, a family of receptor tyrosine kinases which are crucial for migration, repulsion and adhesion during neuronal, vascular and epithelial development. Binds promiscuously Eph receptors residing on adjacent cells, leading to contact-dependent bidirectional signaling into neighboring cells. The signaling pathway downstream of the receptor is referred to as forward signaling while the signaling pathway downstream of the ephrin ligand is referred to as reverse signaling. With the epha2 receptor may play a role in bone remodeling through regulation of osteoclastogenesis and osteoblastogenesis. This Danio rerio (Zebrafish) protein is Ephrin-A2 (efna2).